The following is a 106-amino-acid chain: Thioredoxin (106 aa).

The 105-residue stretch at 2-106 (SHYIELTEEN…LKEQLNKLLG (105 aa)) folds into the Thioredoxin domain. Cysteine 30 and cysteine 33 are oxidised to a cystine.

Belongs to the thioredoxin family.

Participates in various redox reactions through the reversible oxidation of its active center dithiol to a disulfide and catalyzes dithiol-disulfide exchange reactions. This is Thioredoxin (trxA) from Helicobacter pylori (strain J99 / ATCC 700824) (Campylobacter pylori J99).